Reading from the N-terminus, the 89-residue chain is uncharacterized protein (89 aa).

This is an uncharacterized protein from Bacillus subtilis (strain 168).